We begin with the raw amino-acid sequence, 95 residues long: Co-chaperonin GroES (95 aa).

It belongs to the GroES chaperonin family. Heptamer of 7 subunits arranged in a ring. Interacts with the chaperonin GroEL.

The protein localises to the cytoplasm. Together with the chaperonin GroEL, plays an essential role in assisting protein folding. The GroEL-GroES system forms a nano-cage that allows encapsulation of the non-native substrate proteins and provides a physical environment optimized to promote and accelerate protein folding. GroES binds to the apical surface of the GroEL ring, thereby capping the opening of the GroEL channel. The chain is Co-chaperonin GroES from Desulfatibacillum aliphaticivorans.